Reading from the N-terminus, the 771-residue chain is 5-methyltetrahydropteroyltriglutamate--homocysteine methyltransferase (771 aa).

5-methyltetrahydropteroyltri-L-glutamate-binding positions include 13–16 and Lys128; that span reads RELK. L-homocysteine is bound by residues 451–453 and Glu504; that span reads IGS. L-methionine is bound by residues 451-453 and Glu504; that span reads IGS. Residues 535 to 536 and Trp581 each bind 5-methyltetrahydropteroyltri-L-glutamate; that span reads RC. Residue Asp619 coordinates L-homocysteine. Residue Asp619 participates in L-methionine binding. Glu625 is a binding site for 5-methyltetrahydropteroyltri-L-glutamate. The Zn(2+) site is built by His661, Cys663, and Glu685. The active-site Proton donor is the His714. Cys746 contacts Zn(2+).

This sequence belongs to the vitamin-B12 independent methionine synthase family. The cofactor is Zn(2+).

It carries out the reaction 5-methyltetrahydropteroyltri-L-glutamate + L-homocysteine = tetrahydropteroyltri-L-glutamate + L-methionine. It participates in amino-acid biosynthesis; L-methionine biosynthesis via de novo pathway; L-methionine from L-homocysteine (MetE route): step 1/1. In terms of biological role, catalyzes the transfer of a methyl group from 5-methyltetrahydrofolate to homocysteine resulting in methionine formation. This is 5-methyltetrahydropteroyltriglutamate--homocysteine methyltransferase from Nitrobacter winogradskyi (strain ATCC 25391 / DSM 10237 / CIP 104748 / NCIMB 11846 / Nb-255).